The sequence spans 1862 residues: Ankyrin-1 (1862 aa).

Positions 1-827 (MGFCKADAAT…DELVGSKAER (827 aa)) are 89 kDa domain. 23 ANK repeats span residues 40-69 (NGLN…ILET), 73-102 (KGNT…NVNA), 106-135 (KGFT…NQNV), 139-168 (DGFT…KGKV), 170-197 (LPAL…NPDV), 201-230 (TGFT…SVNF), 234-263 (NGIT…QIET), 267-296 (DELT…PIQA), 300-329 (NGLS…EIDD), 333-362 (DHLT…KPNS), 366-395 (NGFT…SIDA), 399-428 (SGLT…SPNV), 432-461 (KVET…KANA), 465-494 (DDQT…SPNL), 498-527 (AGHT…SQAC), 531-560 (KGFT…HPNA), 564-593 (NGLT…SPHS), 597-626 (NGYT…SANA), 630-659 (QGVT…NGNL), 663-692 (SGLT…TVDA), 696-725 (MGYT…DVNA), 729-758 (LGYS…SPNE), and 762-791 (NGTT…ETSV). The residue at position 55 (K55) is a Phosphoserine. A (3S)-3-hydroxyasparagine; by HIF1AN; partial modification is found at N101. Residue N229 is modified to (3S)-3-hydroxyasparagine; by HIF1AN. Phosphoserine is present on S425. Residues N427 and N460 each carry the (3S)-3-hydroxyasparagine; by HIF1AN modification. A (3S)-3-hydroxyasparagine; by HIF1AN mark is found at N625 and N658. The residue at position 691 (D691) is a (3S)-3-hydroxyaspartate; by HIF1AN. A (3S)-3-hydroxyasparagine; by HIF1AN modification is found at N724. S755 carries the phosphoserine modification. N757 carries the post-translational modification (3S)-3-hydroxyasparagine; by HIF1AN. A phosphoserine mark is found at S777, S813, S830, and S852. The disordered stretch occupies residues 812 to 834 (VSEDEGDELVGSKAERRDSRDVG). Residues 824–834 (KAERRDSRDVG) show a composition bias toward basic and acidic residues. T862 carries the phosphothreonine modification. Residues 872–900 (DQEQASKEYDEDSLIPSSPATETSDNISP) are disordered. Positions 886 to 900 (IPSSPATETSDNISP) are enriched in polar residues. ZU5 domains lie at 909 to 1064 (FLVS…IMSR) and 1066 to 1212 (CQDY…LSDC). T957 bears the Phosphothreonine mark. Residue Y1069 is modified to Phosphotyrosine. Phosphoserine is present on S1078. The interval 1197-1331 (ANFTTNVSAR…PVKVRDSSRE (135 aa)) is UPA domain. 2 positions are modified to phosphothreonine: T1374 and T1376. S1386 and S1388 each carry phosphoserine. The interval 1387-1862 (ESRLGFTSDT…KRASLKRGKQ (476 aa)) is 55 kDa regulatory domain. Residue T1396 is modified to Phosphothreonine. A Death domain is found at 1399 to 1483 (VEMRMAVIRE…EIVNMLEGSG (85 aa)). Residues S1424, S1473, and S1482 each carry the phosphoserine modification. The tract at residues 1481 to 1506 (GSGRQSRNLKPERRHGDREYSLSPSQ) is disordered. A compositionally biased stretch (basic and acidic residues) spans 1489-1500 (LKPERRHGDREY). Phosphoserine occurs at positions 1519, 1529, and 1612. Disordered stretches follow at residues 1598 to 1720 (EGAH…GPHS) and 1744 to 1767 (VSTR…KEPS). Residues 1637–1647 (EGQRSEKKRQE) are compositionally biased toward basic and acidic residues. The span at 1648–1666 (VSGTEQDTETEVSLVSGQQ) shows a compositional bias: polar residues. 3 positions are modified to phosphoserine: S1660, S1675, and S1685. Residues 1681 to 1694 (VLDRSQARTLDWDK) show a composition bias toward basic and acidic residues. Positions 1695-1720 (QGSTAVHPQEATQSSWQEEVTQGPHS) are enriched in polar residues.

In terms of assembly, component of the ankyrin-1 complex in the erythrocyte, composed of ANK1, RHCE, RHAG, SLC4A1, EPB42, GYPA, GYPB and AQP1. Interacts with a number of integral membrane proteins and cytoskeletal proteins. Interacts (via N-terminus) with SPTB/spectrin (beta chain). Also interacts with TTN/titin. Isoform Mu17 interacts with OBSCN isoform 3/obscurin. Interacts with HIF1AN. Interacts (via ANK 1-5 repeats) with RHCE; this interaction mediates the primary membrane attachment site for ANK1. Interacts (via ANK 1-2 repeats) with AQP1 (via the N-terminal). Interacts (via ANK 1-13 repeats) with EPB42. Interacts directly with SLC4A1 (via the cytoplasmic domain); this interaction is mediated by the SLC4A1 Band 3-II and Band 3-III dimers. Regulated by phosphorylation. In terms of processing, acylated by palmitic acid group(s). Post-translationally, hydroxylated by HIF1AN at several asparagine and 1 aspartate residue within ANK repeat region; hydroxylation seems to increase the conformational stability of this region and may also modulate protein-protein interactions mediated by the ANK repeat region.

The protein resides in the cytoplasm. The protein localises to the cytoskeleton. It is found in the membrane. It localises to the sarcoplasmic reticulum. Component of the ankyrin-1 complex, a multiprotein complex involved in the stability and shape of the erythrocyte membrane. Attaches integral membrane proteins to cytoskeletal elements; binds to the erythrocyte membrane protein band 4.2, to Na-K ATPase, to the lymphocyte membrane protein GP85, and to the cytoskeletal proteins fodrin, tubulin, vimentin and desmin. Erythrocyte ankyrins also link spectrin (beta chain) to the cytoplasmic domain of the erythrocytes anion exchange protein; they retain most or all of these binding functions. This chain is Ankyrin-1, found in Mus musculus (Mouse).